The primary structure comprises 181 residues: Regulator of G-protein signaling 10 (181 aa).

Residues 1–35 (MFTRAVSRLSRKRPPSDIHDGDGSSSSGHQSLKST) are disordered. Phosphoserine is present on residues serine 24 and serine 41. Residues 41 to 156 (SLENLLEDPE…LKSDLFLKPK (116 aa)) enclose the RGS domain. Cysteine 74 is lipidated: S-palmitoyl cysteine. The tract at residues 155–181 (PKRTEEEEEEPPDAQTAAKRASRIYNT) is disordered. Residue serine 176 is modified to Phosphoserine.

Interacts with GNAZ, GNAI1 and GNAI3. Associates specifically with the activated, GTP-bound forms of GNAZ and GNAI3.

It localises to the cytoplasm. It is found in the cytosol. Its subcellular location is the nucleus. Functionally, regulates G protein-coupled receptor signaling cascades, including signaling downstream of the muscarinic acetylcholine receptor CHRM2. Inhibits signal transduction by increasing the GTPase activity of G protein alpha subunits, thereby driving them into their inactive GDP-bound form. Modulates the activity of potassium channels that are activated in response to CHRM2 signaling. Activity on GNAZ is inhibited by palmitoylation of the G-protein. The protein is Regulator of G-protein signaling 10 (Rgs10) of Mus musculus (Mouse).